The following is a 247-amino-acid chain: ATP synthase subunit a, chloroplastic (247 aa).

Helical transmembrane passes span glutamine 38 to valine 58, valine 95 to leucine 115, isoleucine 134 to serine 154, leucine 199 to leucine 219, and glycine 220 to glycine 240.

It belongs to the ATPase A chain family. As to quaternary structure, F-type ATPases have 2 components, CF(1) - the catalytic core - and CF(0) - the membrane proton channel. CF(1) has five subunits: alpha(3), beta(3), gamma(1), delta(1), epsilon(1). CF(0) has four main subunits: a, b, b' and c.

The protein localises to the plastid. Its subcellular location is the chloroplast thylakoid membrane. Key component of the proton channel; it plays a direct role in the translocation of protons across the membrane. In Sorghum bicolor (Sorghum), this protein is ATP synthase subunit a, chloroplastic.